Here is a 465-residue protein sequence, read N- to C-terminus: Ribosomal oxygenase 2 (465 aa).

The region spanning 139–271 (QPQRFKDELW…NSWGDYLLDS (133 aa)) is the JmjC domain. Positions 179, 181, and 240 each coordinate Fe cation. Ser309 bears the Phosphoserine mark.

It belongs to the ROX family. MINA53 subfamily. It depends on Fe(2+) as a cofactor.

It localises to the nucleus. Its subcellular location is the nucleolus. It carries out the reaction L-histidyl-[ribosomal protein uL15] + 2-oxoglutarate + O2 = (3S)-3-hydroxy-L-histidyl-[ribosomal protein uL15] + succinate + CO2. The enzyme catalyses L-histidyl-[protein] + 2-oxoglutarate + O2 = (3S)-3-hydroxy-L-histidyl-[protein] + succinate + CO2. Oxygenase that can act as both a histone lysine demethylase and a ribosomal histidine hydroxylase. Is involved in the demethylation of trimethylated 'Lys-9' on histone H3 (H3K9me3), leading to an increase in ribosomal RNA expression. Also catalyzes the hydroxylation of 60S ribosomal protein L27a on 'His-39'. May play an important role in cell growth and survival. May be involved in ribosome biogenesis, most likely during the assembly process of pre-ribosomal particles. The protein is Ribosomal oxygenase 2 of Rattus norvegicus (Rat).